Reading from the N-terminus, the 206-residue chain is ATP synthase subunit b (206 aa).

The chain crosses the membrane as a helical span at residues 10–30 (LLKPFVSTAAICLLVAGTVVL).

It belongs to the ATPase B chain family. As to quaternary structure, F-type ATPases have 2 components, F(1) - the catalytic core - and F(0) - the membrane proton channel. F(1) has five subunits: alpha(3), beta(3), gamma(1), delta(1), epsilon(1). F(0) has three main subunits: a(1), b(2) and c(10-14). The alpha and beta chains form an alternating ring which encloses part of the gamma chain. F(1) is attached to F(0) by a central stalk formed by the gamma and epsilon chains, while a peripheral stalk is formed by the delta and b chains.

The protein localises to the cell inner membrane. F(1)F(0) ATP synthase produces ATP from ADP in the presence of a proton or sodium gradient. F-type ATPases consist of two structural domains, F(1) containing the extramembraneous catalytic core and F(0) containing the membrane proton channel, linked together by a central stalk and a peripheral stalk. During catalysis, ATP synthesis in the catalytic domain of F(1) is coupled via a rotary mechanism of the central stalk subunits to proton translocation. Functionally, component of the F(0) channel, it forms part of the peripheral stalk, linking F(1) to F(0). The protein is ATP synthase subunit b of Geobacter sulfurreducens (strain ATCC 51573 / DSM 12127 / PCA).